The sequence spans 313 residues: Probable F-box protein At3g44130 (313 aa).

Residues 1–46 (MASGNLPWELEEEILCRLPLGSLVRLRSVCKHWNDFFNDKWFIKKS) form the F-box domain.

This chain is Probable F-box protein At3g44130, found in Arabidopsis thaliana (Mouse-ear cress).